A 37-amino-acid chain; its full sequence is Photosystem II reaction center protein Psb30 (37 aa).

The helical transmembrane segment at 10–30 threads the bilayer; it reads LISLLLLTLIMLAGPAVIALW.

Belongs to the Psb30/Ycf12 family. As to quaternary structure, PSII is composed of 1 copy each of membrane proteins PsbA, PsbB, PsbC, PsbD, PsbE, PsbF, PsbH, PsbI, PsbJ, PsbK, PsbL, PsbM, PsbT, PsbX, Psb30/Ycf12, peripheral proteins PsbO, CyanoQ (PsbQ), PsbU, PsbV and a large number of cofactors. It forms dimeric complexes.

It is found in the cell inner membrane. Its function is as follows. A core subunit of photosystem II (PSII), probably helps stabilize the reaction center. The protein is Photosystem II reaction center protein Psb30 of Gloeobacter violaceus (strain ATCC 29082 / PCC 7421).